The chain runs to 360 residues: Peptide chain release factor 1 (360 aa).

N5-methylglutamine is present on Q236.

This sequence belongs to the prokaryotic/mitochondrial release factor family. Methylated by PrmC. Methylation increases the termination efficiency of RF1.

Its subcellular location is the cytoplasm. Its function is as follows. Peptide chain release factor 1 directs the termination of translation in response to the peptide chain termination codons UAG and UAA. In Methylococcus capsulatus (strain ATCC 33009 / NCIMB 11132 / Bath), this protein is Peptide chain release factor 1.